The chain runs to 37 residues: M-oxotoxin-Ot2b (37 aa).

Expressed by the venom gland.

It is found in the secreted. In terms of biological role, disrupts biological membranes, particularly those rich in phosphocholine. Has antimicrobial activity against Gram-negative bacterium E.coli, Gram-positive bacteria B.subtilis and S.aureus, and hemolytic activity against sheep, pig and guinea pig red blood cells. Has insecticidal activity against S.frugiperda ovarian cells by opening non-selective ion channels. Enhances the insecticidal activity of spider venom neurotoxic peptides. This is M-oxotoxin-Ot2b from Oxyopes takobius (Lynx spider).